An 81-amino-acid chain; its full sequence is ATP synthase subunit c (81 aa).

Helical transmembrane passes span 5–25 (IAAGALIGGGLIMAGGAIGAG) and 57–77 (VGLVEAAYFINLAFMALFVFA).

This sequence belongs to the ATPase C chain family. In terms of assembly, F-type ATPases have 2 components, F(1) - the catalytic core - and F(0) - the membrane proton channel. F(1) has five subunits: alpha(3), beta(3), gamma(1), delta(1), epsilon(1). F(0) has three main subunits: a(1), b(2) and c(10-14). The alpha and beta chains form an alternating ring which encloses part of the gamma chain. F(1) is attached to F(0) by a central stalk formed by the gamma and epsilon chains, while a peripheral stalk is formed by the delta and b chains.

It is found in the cell membrane. Its function is as follows. F(1)F(0) ATP synthase produces ATP from ADP in the presence of a proton or sodium gradient. F-type ATPases consist of two structural domains, F(1) containing the extramembraneous catalytic core and F(0) containing the membrane proton channel, linked together by a central stalk and a peripheral stalk. During catalysis, ATP synthesis in the catalytic domain of F(1) is coupled via a rotary mechanism of the central stalk subunits to proton translocation. Functionally, key component of the F(0) channel; it plays a direct role in translocation across the membrane. A homomeric c-ring of between 10-14 subunits forms the central stalk rotor element with the F(1) delta and epsilon subunits. The chain is ATP synthase subunit c from Mycobacterium marinum (strain ATCC BAA-535 / M).